Reading from the N-terminus, the 563-residue chain is Src substrate protein p85 (563 aa).

Cortactin repeat units lie at residues 89–125 (ASHGYGGKFGVEQDRMDKSAVGHEYQSKLSKHCSQVD), 126–162 (SVKGFGGKFGVQTDRVDQSAVGFEYQGKTEKHASQKD), 163–199 (YSSGFGGKYGVQADRVDKSAVGFDYQGKTEKHESQKD), 200–236 (YSKGFGGKYGVDKDKVDKSAVGFEYQGKTEKHESQKD), 237–273 (YVKGFGGKFGVQTDRQDKCALGWDHQEKVQLHESQKD), and 274–310 (YKSGFGGKFGVQTERQDPSAVGFDYKEKLAKHESQQD). A Cortactin 7; truncated repeat occupies 311–333 (YSKGFGGKYGVQKDRMDKNAATF). Positions 331–477 (ATFEDIEKPT…EAVSQREAEY (147 aa)) are disordered. The stretch at 349–410 (VERVANKTSS…EEQAKAKKQT (62 aa)) forms a coiled coil. A compositionally biased stretch (basic and acidic residues) spans 366–405 (LAKEKEQEDRRKAEAERAQRMAREKQEQEEARRKLEEQAK). Residues 505 to 563 (ELGITAIALYDYQAAGDDEISFDPDDIITNIEMIDDGWWRGVCKGRYGLFPANYVELRQ) form the SH3 domain.

Post-translationally, acetylated. In terms of processing, in normal cells, appears to be phosphorylated on serine and threonine; in cells expressing activated forms of pp60-src, they become heavily phosphorylated on tyrosine in vitro. Tyrosine phosphorylation in transformed cells may contribute to cellular growth regulation and transformation.

It localises to the cytoplasm. It is found in the cytoskeleton. The protein resides in the cell projection. The protein localises to the lamellipodium. Its subcellular location is the ruffle. It localises to the dendrite. It is found in the cell membrane. The protein resides in the podosome. The protein localises to the cell junction. Its subcellular location is the focal adhesion. It localises to the membrane. It is found in the clathrin-coated pit. The protein resides in the dendritic spine. The protein localises to the cell cortex. Its subcellular location is the endoplasmic reticulum. Functionally, contributes to the organization of the actin cytoskeleton and cell shape. Plays a role in the formation of lamellipodia and in cell migration. Plays a role in the regulation of neuron morphology, axon growth and formation of neuronal growth cones, and may play a role in the regulation of neuronal spine density. Plays a role in focal adhesion assembly and turnover. Plays a role in intracellular protein transport and endocytosis, and in modulating the levels of potassium channels present at the cell membrane. Plays a role in endocytosis via clathrin-coated pits. This Gallus gallus (Chicken) protein is Src substrate protein p85 (CTTN1).